A 250-amino-acid polypeptide reads, in one-letter code: 5'-nucleotidase SurE (250 aa).

Positions 8, 9, 39, and 91 each coordinate a divalent metal cation.

Belongs to the SurE nucleotidase family. The cofactor is a divalent metal cation.

The protein resides in the cytoplasm. It carries out the reaction a ribonucleoside 5'-phosphate + H2O = a ribonucleoside + phosphate. Functionally, nucleotidase that shows phosphatase activity on nucleoside 5'-monophosphates. This is 5'-nucleotidase SurE from Leptospira interrogans serogroup Icterohaemorrhagiae serovar copenhageni (strain Fiocruz L1-130).